The primary structure comprises 415 residues: Enolase (415 aa).

A (2R)-2-phosphoglycerate-binding site is contributed by Q161. E203 serves as the catalytic Proton donor. Residues D240, E281, and D308 each coordinate Mg(2+). The (2R)-2-phosphoglycerate site is built by K333, R362, S363, and K384. The active-site Proton acceptor is the K333.

Belongs to the enolase family. The cofactor is Mg(2+).

Its subcellular location is the cytoplasm. It is found in the secreted. It localises to the cell surface. The catalysed reaction is (2R)-2-phosphoglycerate = phosphoenolpyruvate + H2O. The protein operates within carbohydrate degradation; glycolysis; pyruvate from D-glyceraldehyde 3-phosphate: step 4/5. Its function is as follows. Catalyzes the reversible conversion of 2-phosphoglycerate (2-PG) into phosphoenolpyruvate (PEP). It is essential for the degradation of carbohydrates via glycolysis. This chain is Enolase, found in Campylobacter hominis (strain ATCC BAA-381 / DSM 21671 / CCUG 45161 / LMG 19568 / NCTC 13146 / CH001A).